The chain runs to 372 residues: Cell division protein FtsZ 1 (372 aa).

GTP contacts are provided by residues 51 to 55, 138 to 140, glutamate 169, arginine 173, and aspartate 216; these read GAGCN and GTG. A disordered region spans residues 352–372; it reads EETPAPSEEETTPVKIDIPEL.

Belongs to the FtsZ family. Homodimer. Polymerizes to form a dynamic ring structure in a strictly GTP-dependent manner. Interacts directly with several other division proteins.

It localises to the cytoplasm. Its function is as follows. Essential cell division protein that forms a contractile ring structure (Z ring) at the future cell division site. The regulation of the ring assembly controls the timing and the location of cell division. One of the functions of the FtsZ ring is to recruit other cell division proteins to the septum to produce a new cell wall between the dividing cells. Binds GTP and shows GTPase activity. This is Cell division protein FtsZ 1 from Pyrococcus horikoshii (strain ATCC 700860 / DSM 12428 / JCM 9974 / NBRC 100139 / OT-3).